Here is a 689-residue protein sequence, read N- to C-terminus: Glycine--tRNA ligase beta subunit (689 aa).

Belongs to the class-II aminoacyl-tRNA synthetase family. As to quaternary structure, tetramer of two alpha and two beta subunits.

Its subcellular location is the cytoplasm. The catalysed reaction is tRNA(Gly) + glycine + ATP = glycyl-tRNA(Gly) + AMP + diphosphate. The sequence is that of Glycine--tRNA ligase beta subunit from Sodalis glossinidius (strain morsitans).